Consider the following 196-residue polypeptide: Holliday junction branch migration complex subunit RuvA (196 aa).

Positions 1 to 63 (MINKIYGKII…EDEIKLFGFL (63 aa)) are domain I. A domain II region spans residues 64–138 (NVSEREVFEE…GKLVKADELT (75 aa)). A region of interest (flexible linker) is located at residue Thr-138. A domain III region spans residues 139 to 196 (SSVFKFKDLEQSIVNMGFDRKLVVAAIKEIMLIDEFLMLREVEQEQFLFRETLKRLSG).

It belongs to the RuvA family. Homotetramer. Forms an RuvA(8)-RuvB(12)-Holliday junction (HJ) complex. HJ DNA is sandwiched between 2 RuvA tetramers; dsDNA enters through RuvA and exits via RuvB. An RuvB hexamer assembles on each DNA strand where it exits the tetramer. Each RuvB hexamer is contacted by two RuvA subunits (via domain III) on 2 adjacent RuvB subunits; this complex drives branch migration. In the full resolvosome a probable DNA-RuvA(4)-RuvB(12)-RuvC(2) complex forms which resolves the HJ.

It localises to the cytoplasm. The RuvA-RuvB-RuvC complex processes Holliday junction (HJ) DNA during genetic recombination and DNA repair, while the RuvA-RuvB complex plays an important role in the rescue of blocked DNA replication forks via replication fork reversal (RFR). RuvA specifically binds to HJ cruciform DNA, conferring on it an open structure. The RuvB hexamer acts as an ATP-dependent pump, pulling dsDNA into and through the RuvAB complex. HJ branch migration allows RuvC to scan DNA until it finds its consensus sequence, where it cleaves and resolves the cruciform DNA. This chain is Holliday junction branch migration complex subunit RuvA, found in Borrelia hermsii (strain HS1 / DAH).